The primary structure comprises 312 residues: MSAQLQHVSVLLTEAVDALAIKPEGIYVDGTFGRGGHSRAVLARLGAGGRLIAFDRDPAAIAAGQAIADPRLELVHAPFSEFAVVLDRLGVSAVDGVLLDLGVSSPQLDDASRGMSFRFDAPLDMRMDTSRGRTVAEWLAEASVAEITEVIRDYGEERFAYAIAKAIAAARTGGAIATTGQLAAIVEKAVRTREPGQHPATRSFQALRIFINQELEELTTVLPDCVARLSEGGRLVVISFHSLEDRIVKRFLRDEARPPQLPSRLPVRAADLPPPRLQLVGKAQRPGEAEVAANPRARSAVMRVAERCGVAA.

S-adenosyl-L-methionine is bound by residues 35 to 37 (GGH), Asp-55, Phe-79, Asp-100, and Gln-107.

This sequence belongs to the methyltransferase superfamily. RsmH family.

The protein localises to the cytoplasm. It carries out the reaction cytidine(1402) in 16S rRNA + S-adenosyl-L-methionine = N(4)-methylcytidine(1402) in 16S rRNA + S-adenosyl-L-homocysteine + H(+). In terms of biological role, specifically methylates the N4 position of cytidine in position 1402 (C1402) of 16S rRNA. The chain is Ribosomal RNA small subunit methyltransferase H from Azoarcus sp. (strain BH72).